Here is a 97-residue protein sequence, read N- to C-terminus: Ice-structuring protein (97 aa).

Residues 1 to 23 (MALSLFTVGQLIFLFWTLRITEA) form the signal peptide. Positions 24–48 (NPDPAAKAAPAAVADPAAAAAAAVA) are cleaved as a propeptide — removed by a dipeptidylpeptidase.

This sequence belongs to the type-I AFP family. Detected in blood serum (at protein level).

The protein resides in the secreted. Functionally, contributes to protect fish blood from freezing at subzero sea water temperatures. Lowers the blood freezing point. Binds to nascent ice crystals and prevents further growth. This is Ice-structuring protein from Myzopsetta ferruginea (Yellowtail flounder).